Here is an 883-residue protein sequence, read N- to C-terminus: MNEQYSALRSNVSMLGKVLGETIKDALGEHILDRVETIRKLSKSSRAGNDADRQELLTTLQNLSNDELLPVARAFSQFLNLANTAEQYHSISPKGEAASNPEVIARTLRKLKNQPDLSEATIKKAVESLSLELVLTAHPTEITRRTLIHKMVEVNTCLKQLDNKDLADYERNQLMRRLRQLIAQSWHTDEIRKQRPSPVDEAKWGFAVVENSLWQGVPNYLRELNEQLEENLGFKLPVDFVPVRFTSWMGGDRDGNPNVTADITRHVLLLSRWKATDLFLKDIQVLVSELSMVEATPELLALVGEEGAAEPYRYLMKNLRSRLMTTQAWLEARLKGQKLPKPEGLLTQNEELWEPLYACYQSLQACGMGIIANGDLLDTLRRVKCFGVPLVRIDIRQESTRHTEALGELTRYLGIGDYESWSEADKQAFLIRELNSKRPLLPRNWQPSAETREVLDTCQVIAEAPQGSIAAYVISMAKTPSDVLAVHLLLKEAGIGFAMPVAPLFETLDDLNNANDVMTQLLNIDWYRGLIQGKQMVMIGYSDSAKDAGVMAASWAQYQAQDALIKTCEKAGIELTLFHGRGGSIGRGGAPAHAALLSQPPGSLKGGLRVTEQGEMIRFKYGLPEITVSSLSLYTGAILEANLLPPPEPKESWRRIMDELSVISCDVYRGYVRENKDFVPYFRSATPEQELGKLPLGSRPAKRRPTGGVESLRAIPWIFAWTQNRLMLPAWLGAGTALQKVVEDGKQSELETMCRDWPFFSTRLGMLEMVFAKADLWLAEYYDQRLVAKELWPLGKELRNLLEEDIKVVLAIANDSHLMADLPWIAESIQLRNIYTDPLNVLQAELLHRSRLTEQNGKEPDPRVEQALMVTIAGVAAGMRNTG.

Active-site residues include histidine 138 and lysine 546.

This sequence belongs to the PEPCase type 1 family. Requires Mg(2+) as cofactor.

It catalyses the reaction oxaloacetate + phosphate = phosphoenolpyruvate + hydrogencarbonate. Functionally, forms oxaloacetate, a four-carbon dicarboxylic acid source for the tricarboxylic acid cycle. The polypeptide is Phosphoenolpyruvate carboxylase (Escherichia fergusonii (strain ATCC 35469 / DSM 13698 / CCUG 18766 / IAM 14443 / JCM 21226 / LMG 7866 / NBRC 102419 / NCTC 12128 / CDC 0568-73)).